We begin with the raw amino-acid sequence, 618 residues long: Alpha-dioxygenase PIOX (618 aa).

Residue His157 is the Proton acceptor of the active site. A Ca(2+)-binding site is contributed by Asp158. His162 contacts heme b. Ca(2+) is bound by residues Thr210, Trp212, Asp214, and Ser216. His311 serves as a coordination point for hexadecanoate. Heme b contacts are provided by His382, Arg479, and Arg483. Residue Glu599 participates in hexadecanoate binding.

Belongs to the peroxidase family. It depends on heme b as a cofactor. Ca(2+) is required as a cofactor.

The catalysed reaction is a 1,2-saturated fatty acid + O2 = a (2R)-2-hydroperoxy fatty acid. It catalyses the reaction (9Z,12Z)-octadecadienoate + O2 = (2R,9Z,12Z)-2-hydroperoxyoctadecadienoate. It carries out the reaction hexadecanoate + O2 = (2R)-2-hydroperoxyhexadecanoate. The enzyme catalyses (9Z,12Z,15Z)-octadecatrienoate + O2 = (R)-2-hydroperoxy-(9Z,12Z,15Z)-octadecatrienoate. The catalysed reaction is tetradecanoate + O2 = (2R)-2-hydroperoxytetradecanoate. It catalyses the reaction octadecanoate + O2 = (2R)-2-hydroperoxyoctadecanoate. It carries out the reaction (9Z)-octadecenoate + O2 = (2R,9Z)-2-hydroperoxyoctadecenoate. Its function is as follows. Alpha-dioxygenase that catalyzes the primary oxygenation step of a variety of 14-20 carbon fatty acids, containing up to three unsaturated bonds, into their corresponding 2R-hydroperoxides. Involved in the production of oxylipins that function in cell signaling, wound healing, and protection from infection. In Oryza sativa subsp. japonica (Rice), this protein is Alpha-dioxygenase PIOX.